We begin with the raw amino-acid sequence, 251 residues long: Triosephosphate isomerase (251 aa).

N12 to K14 is a substrate binding site. H98 functions as the Electrophile in the catalytic mechanism. E168 (proton acceptor) is an active-site residue. Residues G174, S213, and G234–G235 each bind substrate.

Belongs to the triosephosphate isomerase family. As to quaternary structure, homodimer.

It is found in the cytoplasm. The enzyme catalyses D-glyceraldehyde 3-phosphate = dihydroxyacetone phosphate. The protein operates within carbohydrate biosynthesis; gluconeogenesis. Its pathway is carbohydrate degradation; glycolysis; D-glyceraldehyde 3-phosphate from glycerone phosphate: step 1/1. In terms of biological role, involved in the gluconeogenesis. Catalyzes stereospecifically the conversion of dihydroxyacetone phosphate (DHAP) to D-glyceraldehyde-3-phosphate (G3P). This is Triosephosphate isomerase from Bradyrhizobium diazoefficiens (strain JCM 10833 / BCRC 13528 / IAM 13628 / NBRC 14792 / USDA 110).